A 789-amino-acid polypeptide reads, in one-letter code: Probable phosphoketolase (789 aa).

The protein belongs to the XFP family. It depends on thiamine diphosphate as a cofactor.

The polypeptide is Probable phosphoketolase (Brucella abortus (strain 2308)).